Here is a 49-residue protein sequence, read N- to C-terminus: Large ribosomal subunit protein bL33B (49 aa).

The protein belongs to the bacterial ribosomal protein bL33 family.

This chain is Large ribosomal subunit protein bL33B, found in Limosilactobacillus fermentum (strain NBRC 3956 / LMG 18251) (Lactobacillus fermentum).